Consider the following 526-residue polypeptide: Probable rhamnogalacturonase B (526 aa).

Positions 1 to 20 (MHVNTLSVLSLVGLVPLAAA) are cleaved as a signal peptide. A disulfide bridge links cysteine 41 with cysteine 67. Asparagine 144 is a glycosylation site (N-linked (GlcNAc...) asparagine). The active-site Proton donor is aspartate 218. Cysteine 220 and cysteine 237 are disulfide-bonded. Residues asparagine 238 and asparagine 253 are each glycosylated (N-linked (GlcNAc...) asparagine). Histidine 293 is an active-site residue. N-linked (GlcNAc...) asparagine glycosylation occurs at asparagine 320. 2 disulfide bridges follow: cysteine 343–cysteine 349 and cysteine 371–cysteine 380.

It belongs to the glycosyl hydrolase 28 family.

Its subcellular location is the secreted. It catalyses the reaction Endohydrolysis of alpha-D-GalA-(1-&gt;2)-alpha-L-Rha glycosidic bond in the rhamnogalacturonan I backbone with initial inversion of anomeric configuration releasing oligosaccharides with beta-D-GalA at the reducing end.. Pectinolytic enzymes consist of four classes of enzymes: pectine lyase, polygalacturonase, pectin methylesterase and rhamnogalacturonase. Hydrolyzes alpha-D-galacturonopyranosyl-(1,2)-alpha-L-rhamnopyranosyl linkages in the backbone of the hairy regions of pectins. This is Probable rhamnogalacturonase B (rhgB) from Aspergillus terreus (strain NIH 2624 / FGSC A1156).